The following is a 95-amino-acid chain: Small ribosomal subunit protein uS17 (95 aa).

This sequence belongs to the universal ribosomal protein uS17 family. In terms of assembly, part of the 30S ribosomal subunit.

Its function is as follows. One of the primary rRNA binding proteins, it binds specifically to the 5'-end of 16S ribosomal RNA. This chain is Small ribosomal subunit protein uS17, found in Mesomycoplasma hyopneumoniae (strain 7448) (Mycoplasma hyopneumoniae).